Consider the following 342-residue polypeptide: S-adenosylmethionine:tRNA ribosyltransferase-isomerase (342 aa).

It belongs to the QueA family. In terms of assembly, monomer.

The protein localises to the cytoplasm. The catalysed reaction is 7-aminomethyl-7-carbaguanosine(34) in tRNA + S-adenosyl-L-methionine = epoxyqueuosine(34) in tRNA + adenine + L-methionine + 2 H(+). It functions in the pathway tRNA modification; tRNA-queuosine biosynthesis. Functionally, transfers and isomerizes the ribose moiety from AdoMet to the 7-aminomethyl group of 7-deazaguanine (preQ1-tRNA) to give epoxyqueuosine (oQ-tRNA). The chain is S-adenosylmethionine:tRNA ribosyltransferase-isomerase from Brevibacillus brevis (strain 47 / JCM 6285 / NBRC 100599).